Reading from the N-terminus, the 131-residue chain is Small ribosomal subunit protein bS6 (131 aa).

The disordered stretch occupies residues 97 to 131 (TEASPMAKARDERDSRRGPAGERSYDEAHAEEIAE). Residues 104–131 (KARDERDSRRGPAGERSYDEAHAEEIAE) are compositionally biased toward basic and acidic residues.

This sequence belongs to the bacterial ribosomal protein bS6 family.

Binds together with bS18 to 16S ribosomal RNA. The polypeptide is Small ribosomal subunit protein bS6 (Shewanella baltica (strain OS223)).